The following is a 630-amino-acid chain: tRNA uridine 5-carboxymethylaminomethyl modification enzyme MnmG (630 aa).

Residues 14-19, valine 126, and serine 181 contribute to the FAD site; that span reads GAGHAG. 273 to 287 lines the NAD(+) pocket; the sequence is GPRYCPSIEDKVVRF. Position 370 (glutamine 370) interacts with FAD.

The protein belongs to the MnmG family. In terms of assembly, homodimer. Heterotetramer of two MnmE and two MnmG subunits. FAD serves as cofactor.

It localises to the cytoplasm. NAD-binding protein involved in the addition of a carboxymethylaminomethyl (cmnm) group at the wobble position (U34) of certain tRNAs, forming tRNA-cmnm(5)s(2)U34. This Alkaliphilus metalliredigens (strain QYMF) protein is tRNA uridine 5-carboxymethylaminomethyl modification enzyme MnmG.